Consider the following 501-residue polypeptide: Aspartyl/glutamyl-tRNA(Asn/Gln) amidotransferase subunit B (501 aa).

Residues 276–299 form a disordered region; the sequence is HYQEADGSTSKGRPKETAEDYRYF. A compositionally biased stretch (basic and acidic residues) spans 288–299; the sequence is RPKETAEDYRYF.

The protein belongs to the GatB/GatE family. GatB subfamily. As to quaternary structure, heterotrimer of A, B and C subunits.

It carries out the reaction L-glutamyl-tRNA(Gln) + L-glutamine + ATP + H2O = L-glutaminyl-tRNA(Gln) + L-glutamate + ADP + phosphate + H(+). The catalysed reaction is L-aspartyl-tRNA(Asn) + L-glutamine + ATP + H2O = L-asparaginyl-tRNA(Asn) + L-glutamate + ADP + phosphate + 2 H(+). Allows the formation of correctly charged Asn-tRNA(Asn) or Gln-tRNA(Gln) through the transamidation of misacylated Asp-tRNA(Asn) or Glu-tRNA(Gln) in organisms which lack either or both of asparaginyl-tRNA or glutaminyl-tRNA synthetases. The reaction takes place in the presence of glutamine and ATP through an activated phospho-Asp-tRNA(Asn) or phospho-Glu-tRNA(Gln). This Corynebacterium glutamicum (strain R) protein is Aspartyl/glutamyl-tRNA(Asn/Gln) amidotransferase subunit B.